The sequence spans 798 residues: Protocadherin beta-13 (798 aa).

A signal peptide spans 1-28; the sequence is MEASGKLICRQRQVLFSFLLLGLSLAGA. Residues 29–690 are Extracellular-facing; that stretch reads AEPRSYSVVE…AQADSLTVYL (662 aa). 5 consecutive Cadherin domains span residues 36-134, 139-243, 248-348, 353-451, and 456-561; these read VVEE…SPVF, MLVK…APEF, YRVQ…APEV, FTSP…APAF, and YTLF…SPFV. 2 N-linked (GlcNAc...) asparagine glycosylation sites follow: N418 and N436. An N-linked (GlcNAc...) asparagine glycan is attached at N567. The Cadherin 6 domain maps to 568-671; sequence GSAPCTELVP…LVDGFSQPYL (104 aa). Residues 691-711 traverse the membrane as a helical segment; it reads VVALASVSSLFLFSVLLFVAV. Residues 712 to 798 lie on the Cytoplasmic side of the membrane; that stretch reads RLCRRSRAAS…FPNNFGFNIQ (87 aa).

The protein resides in the cell membrane. Functionally, potential calcium-dependent cell-adhesion protein. May be involved in the establishment and maintenance of specific neuronal connections in the brain. The protein is Protocadherin beta-13 (PCDHB13) of Pan troglodytes (Chimpanzee).